The sequence spans 845 residues: Beta-galactosidase 11 (845 aa).

The first 26 residues, 1–26 (MRKHSLDRWLLTAVLVVLLSSSSSFA), serve as a signal peptide directing secretion. N104 carries N-linked (GlcNAc...) asparagine glycosylation. E197 functions as the Proton donor in the catalytic mechanism. E268 acts as the Nucleophile in catalysis. N269, N300, N395, N752, N784, and N814 each carry an N-linked (GlcNAc...) asparagine glycan. The region spanning 751–840 (DNVSLTATLK…KMLAVQVKCG (90 aa)) is the SUEL-type lectin domain.

It belongs to the glycosyl hydrolase 35 family.

It is found in the secreted. The protein resides in the extracellular space. It localises to the apoplast. It carries out the reaction Hydrolysis of terminal non-reducing beta-D-galactose residues in beta-D-galactosides.. This is Beta-galactosidase 11 (BGAL11) from Arabidopsis thaliana (Mouse-ear cress).